Consider the following 379-residue polypeptide: Stimulator of interferon genes protein (379 aa).

Residues 1 to 17 lie on the Cytoplasmic side of the membrane; that stretch reads MPHSSLHPSIPCPRGHG. Residues 1-190 form a mediates interaction with ZDHHC1 and ZDHHC11 region; that stretch reads MPHSSLHPSI…TYNQHYNNLL (190 aa). The chain crosses the membrane as a helical span at residues 18–34; sequence AQKAALVLLSACLVTLW. Residue K20 forms a Glycyl lysine isopeptide (Lys-Gly) (interchain with G-Cter in ubiquitin) linkage. The Lumenal portion of the chain corresponds to 35-44; the sequence is GLGEPPEHTL. Residues 45-69 traverse the membrane as a helical segment; the sequence is RYLVLHLASLQLGLLLNGVCSLAEE. Topologically, residues 70–91 are cytoplasmic; sequence LRHIHSRYRGSYWRTVRACLGC. Residues C88 and C91 are each lipidated (S-palmitoyl cysteine). Residues 92–106 form a helical membrane-spanning segment; that stretch reads PLRRGALLLLSIYFY. Over 107 to 116 the chain is Lumenal; it reads YSLPNAVGPP. Residues 117-134 traverse the membrane as a helical segment; that stretch reads FTWMLALLGLSQALNILL. At 135–379 the chain is on the cytoplasmic side; it reads GLKGLAPAEI…KPLPLRTDFS (245 aa). K150 participates in a covalent cross-link: Glycyl lysine isopeptide (Lys-Gly) (interchain with G-Cter in ubiquitin). Residues 153–340 form a cyclic dinucleotide-binding domain (CBD) region; sequence FNVAHGLAWS…RHLRQEEKEE (188 aa). Residues S162 and Y167 each contribute to the 2',3'-cGAMP site. The 3',3'-c-di-GMP site is built by S162 and Y167. Residue Y167 participates in 2',3'-cUAMP binding. Position 229 is a phosphothreonine (T229). Residue K236 forms a Glycyl lysine isopeptide (Lys-Gly) (interchain with G-Cter in ubiquitin) linkage. Residue R238 coordinates 2',3'-cGAMP. R238 serves as a coordination point for 2',3'-cUAMP. Residues 238–241 and T263 each bind 3',3'-c-di-GMP; that span reads RVYS. A Phosphoserine modification is found at S241. T263 is a 2',3'-cGAMP binding site. Position 263 (T263) interacts with 2',3'-cUAMP. K338 participates in a covalent cross-link: Glycyl lysine isopeptide (Lys-Gly) (interchain with G-Cter in SUMO). Positions 340-379 are C-terminal tail (CTT); that stretch reads EVTVGSLKTSAVPSTSTMSQEPELLISGMEKPLPLRTDFS. Positions 341–370 are disordered; that stretch reads VTVGSLKTSAVPSTSTMSQEPELLISGMEK. Positions 345–359 are enriched in polar residues; the sequence is SLKTSAVPSTSTMSQ. At T354 the chain carries Phosphothreonine. S355 bears the Phosphoserine; by MAP3K7 mark. Position 356 is a phosphothreonine (T356). 2 positions are modified to phosphoserine; by TBK1: S358 and S366. Positions 363 to 366 match the pLxIS motif motif; that stretch reads LLIS.

Belongs to the STING family. As to quaternary structure, homodimer; forms a homodimer in absence of cyclic nucleotide (c-di-GMP or cGAMP); 'Lys-63'-linked ubiquitination at Lys-150 is required for homodimerization. Homotetramer; in presence of cyclic nucleotide (c-di-GMP or cGAMP), forms tetramers and higher-order oligomers through side-by-side packing. Interacts (when phosphorylated) with IRF3; following activation and phosphorylation on the pLxIS motif by TBK1, recruits IRF3. Interacts with RIGI, MAVS and SSR2. Interacts with RNF5 and TRIM56. Interacts with TBK1; when homodimer, leading to subsequent production of IFN-beta. Interacts with IFIT1 and IFIT2. Interacts with TRIM29; this interaction induces STING1 ubiquitination and subsequent degradation. Associates with the MHC-II complex. Interacts with STEEP1; interaction takes place upon cGAMP-activation and STING1 phosphorylation by MAP3K7/TAK1 and promotes STING1 translocation to COPII vesicles. Interacts with SEC24A, SEC24B, and SEC24C; promoting translocation to COPII vesicles. Interacts (when ubiquitinated) with SQSTM1; leading to relocalization to autophagosomes. Interacts with SURF4. Interacts with HNRNPA2B1. Interacts with ZDHHC1; ZDHHC1 constitutively interacts with STING1 and in presence of DNA viruses activates it by promoting its cGAMP-induced oligomerization and the recruitment of downstream signaling components. Interacts with ZDHHC11; in presence of DNA viruses promotes the recruitment of IRF3 to STING1. Interacts with TOMM70. Interacts with isoform IFI16-beta of IFI16. Interacts with TAB1; promoting recruitment of TAB1 to the endoplasmic reticulum membrane and subsequent activation of MAP3K7/TAK1. Interacts (via transmembrane domain) with TMEM203. Interacts with DDX41. Interacts with TMEM120A (via C-terminal domain); regulates the trafficking of STING1 from the ER to the ER-Golgi intermediate compartment to elicit antiviral effects. (Microbial infection) Interacts with human papillomavirus (HPV) protein E7. In terms of assembly, (Microbial infection) Interacts with adenovirus early E1A protein. As to quaternary structure, (Microbial infection) Interacts with herpes simplex virus 1 protein ICP34.5; this interaction inhibits the intracellular DNA sensing pathway. (Microbial infection) Interacts with Chikungunya virus non-structural protein 1; this interaction results in inhibition of cGAS-STING signaling and increased levels of palmitoylated nsP1 and protein stabilization. In terms of assembly, (Microbial infection) Interacts with human cytomegalovirus proteins UL94, UL42 and UL138; these interactions result in the inhibition of cGAS-STING signaling. As to quaternary structure, (Microbial infection) Interacts with varivella virus protein 39; this interaction results in the inhibition of cGAS-STING signaling. In terms of processing, phosphorylation by TBK1 leads to activation and production of IFN-beta. Following cyclic nucleotide (c-di-GMP or cGAMP)-binding, activation and translocation from the endoplasmic reticulum, STING1 is phosphorylated by TBK1 at Ser-366 in the pLxIS motif. The phosphorylated pLxIS motif constitutes an IRF3-binding motif, leading to recruitment of the transcription factor IRF3 to induce type-I interferons and other cytokines. The phosphorylated pLxIS motif facilitates SENP2 recruitment during late phase of viral infection. Phosphorylated on tyrosine residues upon MHC-II aggregation. Dephosphorylation by PPP6C leads to inactivation and decreased production of IFN-beta. Phosphorylation at Ser-358 is also required to activate IRF3. Phosphorylation at Ser-355 by MAP3K7/TAK1 facilitates its interaction with STEEP1, promoting STING1 translocation to COPII vesicles. Post-translationally, ubiquitinated. Ubiquitinated via 'Lys-63'-linked ubiquitin chains in response to double-stranded DNA treatment, leading to relocalization to autophagosomes and subsequent degradation; this process is dependent on SQSTM1. 'Lys-63'-linked ubiquitination mediated by TRIM56 at Lys-150 promotes homodimerization and recruitment of the antiviral kinase TBK1 and subsequent production of IFN-beta. 'Lys-48'-linked polyubiquitination at Lys-150 occurring after viral infection is mediated by RNF5 and leads to proteasomal degradation. 'Lys-11'-linked polyubiquitination at Lys-150 by RNF26 leads to stabilize STING1: it protects STING1 from RNF5-mediated 'Lys-48'-linked polyubiquitination. 'Lys-33'-linked and 'Lys-48'-linked deubiquitinated by USP20; leading to its stabilization and promotion of innate antiviral response. 'Lys-48'-linked deubiquitinated by USP44; leading to its stabilization and promotion of innate antiviral response. Deubiquitinated by USP13; leading to inhibition of innate antiviral response. 'Lys-63'-linked deubiquitinated by USP49; leading to inhibition of the subsequent recruitment of TBK1 to the signaling complex. 'Lys-63'-linked ubiquitination mediated by RNF39 promotes the activation of the cGAS-STING pathway. MARCHF5-mediated ubiquitination prevents the oxidation-induced polymer formation. (Microbial infection) Deubiquitinated by Epstein-Barr virus BPLF1 on both 'Lys-48' and 'Lys-63'-linked ubiquitin chains; leading to inhibition of cGAS-STING signaling. In terms of processing, sumoylated at Lys-338 by TRIM38 during the early phase of viral infection, promoting its stability by preventing its relocalization to autophagosomes and subsequent degradation. Desumoylated by SENP2 during the late phase of viral infection. Post-translationally, palmitoylation takes place in the Golgi apparatus and creates a platform for the recruitment of TBK1. In terms of tissue distribution, ubiquitously expressed. Expressed in skin endothelial cells, alveolar type 2 pneumocytes, bronchial epithelium and alveolar macrophages.

The protein localises to the endoplasmic reticulum membrane. Its subcellular location is the cytoplasm. The protein resides in the perinuclear region. It is found in the endoplasmic reticulum-Golgi intermediate compartment membrane. It localises to the golgi apparatus membrane. The protein localises to the cytoplasmic vesicle. Its subcellular location is the autophagosome membrane. The protein resides in the mitochondrion outer membrane. It is found in the cell membrane. The catalysed reaction is H(+)(in) = H(+)(out). With respect to regulation, activated upon binding to the hydrolysis-resistant 2'3'-cG(s)A(s)MP, an analog of cGAMP, in which phosphodiester linkages are replaced by phosphothioate linkages. Specifically inhibited by small-molecule H-151 (N-(4-ethylphenyl)-N'-1H-indol-3-yl-urea), which covalently binds Cys-91 and prevents palmitoylation and subsequent activation of STING1. In contrast to mouse protein, not activated by anticancer molecule 5,6-dimethylxanthenone 4-acetic acid (DMXAA). Inhibited by compound 18 ([(3S,4S)-2-(4-tert-butyl-3-chlorophenyl)-3-(2,3-dihydro-1,4-benzodioxin-6-yl)-7-fluoro-1-oxo-1,2,3,4-tetrahydroisoquinolin-4-yl]acetate), a competitive inhibitor with slow dissociation kinetics and good oral bioavailability. Homooligomerization and ability to promote the production of type I interferons is activated by C53, a small benzothiazinone-like compound that binds to the transmembrane regions. in the area of the putative pore. In contrast, compound C53, directly inhibits the proton channel activity and facilitate MAP1LC3B/LC3B lipidation and autophagosome formation. In terms of biological role, facilitator of innate immune signaling that acts as a sensor of cytosolic DNA from bacteria and viruses and promotes the production of type I interferon (IFN-alpha and IFN-beta). Innate immune response is triggered in response to non-CpG double-stranded DNA from viruses and bacteria delivered to the cytoplasm. Acts by binding cyclic dinucleotides: recognizes and binds cyclic di-GMP (c-di-GMP), a second messenger produced by bacteria, cyclic UMP-AMP (2',3'-cUAMP), and cyclic GMP-AMP (cGAMP), a messenger produced by CGAS in response to DNA virus in the cytosol. Upon binding to c-di-GMP, cUAMP or cGAMP, STING1 oligomerizes, translocates from the endoplasmic reticulum and is phosphorylated by TBK1 on the pLxIS motif, leading to recruitment and subsequent activation of the transcription factor IRF3 to induce expression of type I interferon and exert a potent anti-viral state. Exhibits 2',3' phosphodiester linkage-specific ligand recognition: can bind both 2'-3' linked cGAMP (2'-3'-cGAMP) and 3'-3' linked cGAMP but is preferentially activated by 2'-3' linked cGAMP. The preference for 2'-3'-cGAMP, compared to other linkage isomers is probably due to the ligand itself, whichs adopts an organized free-ligand conformation that resembles the STING1-bound conformation and pays low energy costs in changing into the active conformation. In addition to promote the production of type I interferons, plays a direct role in autophagy. Following cGAMP-binding, STING1 buds from the endoplasmic reticulum into COPII vesicles, which then form the endoplasmic reticulum-Golgi intermediate compartment (ERGIC). The ERGIC serves as the membrane source for WIPI2 recruitment and LC3 lipidation, leading to formation of autophagosomes that target cytosolic DNA or DNA viruses for degradation by the lysosome. Promotes autophagy by acting as a proton channel that directs proton efflux from the Golgi to facilitate MAP1LC3B/LC3B lipidation. The autophagy- and interferon-inducing activities can be uncoupled and autophagy induction is independent of TBK1 phosphorylation. Autophagy is also triggered upon infection by bacteria: following c-di-GMP-binding, which is produced by live Gram-positive bacteria, promotes reticulophagy. May be involved in translocon function, the translocon possibly being able to influence the induction of type I interferons. May be involved in transduction of apoptotic signals via its association with the major histocompatibility complex class II (MHC-II). Its function is as follows. (Microbial infection) Antiviral activity is antagonized by oncoproteins, such as papillomavirus (HPV) protein E7 and adenovirus early E1A protein. Such oncoproteins prevent the ability to sense cytosolic DNA. This is Stimulator of interferon genes protein from Homo sapiens (Human).